Here is a 165-residue protein sequence, read N- to C-terminus: Small ribosomal subunit protein bS16 (165 aa).

The protein belongs to the bacterial ribosomal protein bS16 family.

This is Small ribosomal subunit protein bS16 from Azobacteroides pseudotrichonymphae genomovar. CFP2.